We begin with the raw amino-acid sequence, 110 residues long: MFSKATLFFTTVSRYRDTQAPIPTGQTNQPTTNQCNTGPVQCCDTTQSASDPINIPGMGLVHVSNANGLVAFGNCSPLVSGGSKCNNQAVCCNGTEFNGLVNVGCTNVSL.

A signal peptide spans 1-27; the sequence is MFSKATLFFTTVSRYRDTQAPIPTGQT. Cystine bridges form between cysteine 35–cysteine 91, cysteine 42–cysteine 85, cysteine 43–cysteine 75, and cysteine 92–cysteine 105.

The protein belongs to the fungal hydrophobin family. In terms of assembly, self-assembles to form functional amyloid fibrils called rodlets. Self-assembly into fibrillar rodlets occurs spontaneously at hydrophobic:hydrophilic interfaces and the rodlets further associate laterally to form amphipathic monolayers.

Its subcellular location is the secreted. The protein resides in the cell wall. Functionally, aerial growth, conidiation, and dispersal of filamentous fungi in the environment rely upon a capability of their secreting small amphipathic proteins called hydrophobins (HPBs) with low sequence identity. Class I can self-assemble into an outermost layer of rodlet bundles on aerial cell surfaces, conferring cellular hydrophobicity that supports fungal growth, development and dispersal; whereas Class II form highly ordered films at water-air interfaces through intermolecular interactions but contribute nothing to the rodlet structure. This chain is Class I hydrophobin Po.HYD, found in Pleurotus ostreatus (Oyster mushroom).